The chain runs to 434 residues: Enolase (434 aa).

Glutamine 167 contacts (2R)-2-phosphoglycerate. Glutamate 209 (proton donor) is an active-site residue. Residues aspartate 246, glutamate 291, and aspartate 318 each contribute to the Mg(2+) site. Positions 343, 372, 373, and 394 each coordinate (2R)-2-phosphoglycerate. Catalysis depends on lysine 343, which acts as the Proton acceptor.

Belongs to the enolase family. Component of the RNA degradosome, a multiprotein complex involved in RNA processing and mRNA degradation. The cofactor is Mg(2+).

It localises to the cytoplasm. The protein localises to the secreted. The protein resides in the cell surface. It catalyses the reaction (2R)-2-phosphoglycerate = phosphoenolpyruvate + H2O. It functions in the pathway carbohydrate degradation; glycolysis; pyruvate from D-glyceraldehyde 3-phosphate: step 4/5. Catalyzes the reversible conversion of 2-phosphoglycerate (2-PG) into phosphoenolpyruvate (PEP). It is essential for the degradation of carbohydrates via glycolysis. The polypeptide is Enolase (Buchnera aphidicola subsp. Acyrthosiphon pisum (strain APS) (Acyrthosiphon pisum symbiotic bacterium)).